Consider the following 41-residue polypeptide: Large ribosomal subunit protein bL36 (41 aa).

The protein belongs to the bacterial ribosomal protein bL36 family.

The chain is Large ribosomal subunit protein bL36 from Granulibacter bethesdensis (strain ATCC BAA-1260 / CGDNIH1).